The following is a 484-amino-acid chain: RuvB-like helicase 1 (484 aa).

Over residues 1 to 11 the composition is skewed to low complexity; that stretch reads MSMAASSSTAT. The interval 1–27 is disordered; sequence MSMAASSSTATVQPSGIITQPPPPSTL. 87–94 lines the ATP pocket; it reads GPPGTGKT.

It belongs to the RuvB family. In terms of assembly, may form heterododecamers with RVB2. Component of the SWR1 chromatin remodeling complex, the INO80 chromatin remodeling complex, and of the R2TP complex.

The protein resides in the nucleus. It carries out the reaction ATP + H2O = ADP + phosphate + H(+). DNA helicase which participates in several chromatin remodeling complexes, including the SWR1 and the INO80 complexes. The SWR1 complex mediates the ATP-dependent exchange of histone H2A for the H2A variant HZT1 leading to transcriptional regulation of selected genes by chromatin remodeling. The INO80 complex remodels chromatin by shifting nucleosomes and is involved in DNA repair. Also involved in pre-rRNA processing. The polypeptide is RuvB-like helicase 1 (RVB1) (Cryptococcus neoformans var. neoformans serotype D (strain B-3501A) (Filobasidiella neoformans)).